The following is a 408-amino-acid chain: NFATC2-interacting protein (408 aa).

The disordered stretch occupies residues 1 to 113; it reads MAEPVGKRGR…LDPGEAPLVP (113 aa). Residues 24–40 are compositionally biased toward low complexity; that stretch reads QRSPSRGTLDVVSVDLV. 7 positions are modified to phosphoserine: Ser-41, Ser-43, Ser-73, Ser-77, Ser-79, Ser-81, and Ser-116. Glycyl lysine isopeptide (Lys-Gly) (interchain with G-Cter in SUMO2) cross-links involve residues Lys-118 and Lys-120. Residues 141 to 205 are disordered; the sequence is EEEVELADSS…TKSRKHTRAL (65 aa). Positions 169–181 are enriched in basic and acidic residues; it reads RTKDKEEKKKTEI. Ser-187, Ser-190, and Ser-193 each carry phosphoserine. Residues 196 to 205 are compositionally biased toward basic residues; sequence TKSRKHTRAL. Residues 197–220 adopt a coiled-coil conformation; it reads KSRKHTRALKKLSEVNKRLQDLRS. Phosphoserine occurs at positions 209 and 303. Phosphothreonine occurs at positions 305 and 307. A Ubiquitin-like domain is found at 337–408; sequence LQLRVQGKEK…ESGDLIEVWG (72 aa). Ser-358 and Ser-379 each carry phosphoserine.

As to quaternary structure, interacts with NFATC2, TRAF1, TRAF2 and PRMT1. Interacts with UBE2I/UBC9. Post-translationally, methylation at the N-terminus by PRMT1 modulates interaction with the NFAT complex and results in augmented cytokine production.

It is found in the nucleus. Its subcellular location is the cytoplasm. In terms of biological role, in T-helper 2 (Th2) cells, regulates the magnitude of NFAT-driven transcription of a specific subset of cytokine genes, including IL3, IL4, IL5 and IL13, but not IL2. Recruits PRMT1 to the IL4 promoter; this leads to enhancement of histone H4 'Arg-3'-methylation and facilitates subsequent histone acetylation at the IL4 locus, thus promotes robust cytokine expression. Down-regulates formation of poly-SUMO chains by UBE2I/UBC9. The protein is NFATC2-interacting protein (NFATC2IP) of Macaca fascicularis (Crab-eating macaque).